The following is a 315-amino-acid chain: Epithelial cell adhesion molecule (315 aa).

An N-terminal signal peptide occupies residues 1 to 23 (MAPPKALAFGLLLAVVTATLAAA). The Extracellular segment spans residues 24–266 (QKDCVCNNYK…APEFSMQGLT (243 aa)). 6 disulfides stabilise this stretch: cysteine 27-cysteine 46, cysteine 29-cysteine 59, cysteine 38-cysteine 48, cysteine 66-cysteine 99, cysteine 110-cysteine 116, and cysteine 118-cysteine 135. One can recognise a Thyroglobulin type-1 domain in the interval 63 to 135 (ASKCLVMKAE…RTDKDTEITC (73 aa)). Asparagine 111 carries an N-linked (GlcNAc...) asparagine glycan. N-linked (GlcNAc...) asparagine glycosylation occurs at asparagine 198. The helical transmembrane segment at 267–289 (AGIIAVIVVVVLAVIAGIVVLVI) threads the bilayer. At 290–315 (STRKRSAKYEKAEIKEMGEIHRELNA) the chain is on the cytoplasmic side.

It belongs to the EPCAM family. Monomer. Interacts with phosphorylated CLDN7. Post-translationally, glycosylation at Asn-198 is crucial for protein stability.

The protein resides in the lateral cell membrane. The protein localises to the cell junction. It localises to the tight junction. Its function is as follows. May act as a physical homophilic interaction molecule between intestinal epithelial cells (IECs) and intraepithelial lymphocytes (IELs) at the mucosal epithelium for providing immunological barrier as a first line of defense against mucosal infection. Plays a role in embryonic stem cells proliferation and differentiation. Up-regulates the expression of FABP5, MYC and cyclins A and E. The polypeptide is Epithelial cell adhesion molecule (Epcam) (Rattus norvegicus (Rat)).